The following is a 159-amino-acid chain: MKRGLTVAVAGAAILVAGLSGCSSNKSTTGSGETTTAAGTTASPGAASGPKVVIDGKDQNVTGSVVCTTAAGNVNIAIGGAATGIAAVLTDGNPPEVKSVGLGNVNGVTLGYTSGTGQGNASATKDGSHYKITGTATGVDMANPMSPVNKSFEIEVTSS.

Residues 1-21 form the signal peptide; that stretch reads MKRGLTVAVAGAAILVAGLSG. The N-palmitoyl cysteine moiety is linked to residue C22. Residue C22 is the site of S-diacylglycerol cysteine attachment. Residues 24 to 51 are disordered; sequence SNKSTTGSGETTTAAGTTASPGAASGPK. Residues 27–49 show a composition bias toward low complexity; that stretch reads STTGSGETTTAAGTTASPGAASG.

It belongs to the mycobacterial 19 kDa antigen family. Modified by Lgt on Cys-22 with an S-linked diacylglycerol with a mixture of C16, C18 and C19 fatty acids, signal peptide is removed by LspA, modifed by Lnt with an amide-linked mixture of C16 and C19 fatty acids.

It localises to the cell membrane. Functionally, might be involved in ligand transport. A host TLR2 agonist, modifies host gene expression in response to pathogen. The protein is Lipoprotein LpqH (lpqH) of Mycobacterium tuberculosis (strain CDC 1551 / Oshkosh).